The primary structure comprises 95 residues: Virion membrane protein OPG135 (95 aa).

The N-terminal stretch at Met-1 to Gly-22 is a signal peptide. At Ala-23–Trp-45 the chain is on the intravirion side. A helical transmembrane segment spans residues Phe-46–Leu-66. At Tyr-67–Ser-83 the chain is on the virion surface side. The tract at residues Asn-76–Ser-95 is disordered. The segment covering Thr-77–Ser-95 has biased composition (low complexity). Residues Asn-79 and Asn-87 are each glycosylated (N-linked (GlcNAc...) asparagine; by host).

It belongs to the oerthopoxvirus OPG135 family.

The protein resides in the virion membrane. It localises to the host cytoplasm. Its function is as follows. Envelope protein. Required for an early step in virion morphogenesis. The protein is Virion membrane protein OPG135 (OPG135) of Homo sapiens (Human).